A 435-amino-acid chain; its full sequence is 5-hydroxybenzimidazole synthase (435 aa).

Residues Met95, Tyr124, His163, 186-188 (SKG), 227-230 (NGLR), and Glu266 contribute to the substrate site. His270 serves as a coordination point for Zn(2+). Tyr293 serves as a coordination point for substrate. His334 provides a ligand contact to Zn(2+). Positions 410, 413, and 417 each coordinate [4Fe-4S] cluster.

This sequence belongs to the ThiC family. 5-hydroxybenzimidazole synthase subfamily. In terms of assembly, homodimer. The cofactor is [4Fe-4S] cluster.

The enzyme catalyses 5-amino-1-(5-phospho-beta-D-ribosyl)imidazole + AH2 + S-adenosyl-L-methionine = 5-hydroxybenzimidazole + 5'-deoxyadenosine + formate + L-methionine + A + NH4(+) + phosphate + 2 H(+). In terms of biological role, catalyzes the conversion of aminoimidazole ribotide (AIR) to 5-hydroxybenzimidazole (5-HBI) in a radical S-adenosyl-L-methionine (SAM)-dependent reaction. Is thus involved in the anaerobic biosynthesis of the benzimidazole lower axial ligand of the cobamide produced by G.metallireducens. This Geobacter metallireducens (strain ATCC 53774 / DSM 7210 / GS-15) protein is 5-hydroxybenzimidazole synthase.